A 530-amino-acid polypeptide reads, in one-letter code: Arginine-containing cyclodipeptide synthase pthA (530 aa).

The Conserved DDXXE motif signature appears at 419 to 423 (DDRAE).

The protein belongs to the arginine-containing cyclodipeptide synthase family.

It carries out the reaction L-aspartyl-tRNA(Asp) + L-arginyl-tRNA(Arg) = cyclo(L-arginyl-L-aspartyl) + tRNA(Asp) + tRNA(Arg) + 2 H(+). The protein operates within secondary metabolite biosynthesis. Functionally, arginine-containing cyclodipeptide synthase; part of the cluster that mediates the biosynthesis of a highly modified cyclo-arginine-aspartate dipeptide (cRD). Within the pathway, pthA acts as the scaffold-generating enzyme and is responsible for formation of the cyclo-Arg-Asp diketopiperazine (cRW) from L-arginyl-tRNA(Arg) + L-aspartyl-tRNA(Asp). Additional enzymes from the cluster then further modify the cyclo-Arg-Asp diketopiperazine (cRW) scaffold. The chain is Arginine-containing cyclodipeptide synthase pthA from Penicillium thymicola.